The sequence spans 906 residues: Alanine--tRNA ligase (906 aa).

The Zn(2+) site is built by histidine 570, histidine 574, cysteine 674, and histidine 678.

This sequence belongs to the class-II aminoacyl-tRNA synthetase family. It depends on Zn(2+) as a cofactor.

Its subcellular location is the cytoplasm. The enzyme catalyses tRNA(Ala) + L-alanine + ATP = L-alanyl-tRNA(Ala) + AMP + diphosphate. Its function is as follows. Catalyzes the attachment of alanine to tRNA(Ala) in a two-step reaction: alanine is first activated by ATP to form Ala-AMP and then transferred to the acceptor end of tRNA(Ala). Also edits incorrectly charged Ser-tRNA(Ala) and Gly-tRNA(Ala) via its editing domain. The protein is Alanine--tRNA ligase of Ureaplasma parvum serovar 3 (strain ATCC 27815 / 27 / NCTC 11736).